The sequence spans 144 residues: Large ribosomal subunit protein uL15 (144 aa).

Residues M1–E10 show a composition bias toward basic and acidic residues. The disordered stretch occupies residues M1 to Q52. A compositionally biased stretch (gly residues) spans T23–Q35.

It belongs to the universal ribosomal protein uL15 family. As to quaternary structure, part of the 50S ribosomal subunit.

Its function is as follows. Binds to the 23S rRNA. The chain is Large ribosomal subunit protein uL15 from Ligilactobacillus salivarius (strain UCC118) (Lactobacillus salivarius).